The chain runs to 156 residues: Large ribosomal subunit protein uL15 (156 aa).

Positions 1–44 (MKLNELRDNPGASPKRTRVGRGPGSGKGKMGGRGIKGQKSRSGV) are disordered. A compositionally biased stretch (gly residues) spans 21–35 (RGPGSGKGKMGGRGI).

The protein belongs to the universal ribosomal protein uL15 family. Part of the 50S ribosomal subunit.

Functionally, binds to the 23S rRNA. In Ruegeria sp. (strain TM1040) (Silicibacter sp.), this protein is Large ribosomal subunit protein uL15.